The chain runs to 407 residues: Large ribosomal subunit protein uL3-like (407 aa).

Positions 1–31 (MSHRKFSAPRHGHLGFLPHKRSRRHRGKVKS) are enriched in basic residues. The disordered stretch occupies residues 1 to 37 (MSHRKFSAPRHGHLGFLPHKRSRRHRGKVKSWPRDDP).

This sequence belongs to the universal ribosomal protein uL3 family. Component of the large ribosomal subunit (LSU). Part of a LSU subcomplex, the 5S RNP which is composed of the 5S RNA, RPL5 and RPL11. Interacts with NVL in an ATP-dependent manner. Interacts with RRP1B. Interacts with IPO5, IPO7 and KPNB1; these interactions may be involved in RPL5 nuclear import for the assembly of ribosomal subunits. Interacts with RRP1B. In terms of tissue distribution, expression is restricted to striated muscles.

Heart- and skeletal muscle-specific component of the ribosome, which regulates muscle function. Component of the large ribosomal subunit in striated muscle cells: replaces the RPL3 paralog in the ribosome in these cells. The ribosome is a large ribonucleoprotein complex responsible for the synthesis of proteins in the cell. Inhibits myotube growth and muscle function. This Mus musculus (Mouse) protein is Large ribosomal subunit protein uL3-like.